Reading from the N-terminus, the 244-residue chain is MSTSKRKRADEAQWNKRSTKKKGSAPQAKKPGGKVEKPSLQIQTLLHSGDTMITVPSGGVCDLINTYARGSDEGNRHTSETLTYKVGVDYHFVADAASCKYSNRGTGVMWLVYDTTPGGNAPTTQDIFAYPSALKAWPTTWKVSRELCHRFVVKRRWLFTMETDGRIGSDTPPSNQSWPPCKRNVDFHKFTSGLGVRTQWKNVTDGGVGAIQRGALYLVIAPGNGITFTAHGQTRLYFKSVGNQ.

Positions 1–24 (MSTSKRKRADEAQWNKRSTKKKGS) match the Bipartite nuclear localization signal motif. A disordered region spans residues 1–39 (MSTSKRKRADEAQWNKRSTKKKGSAPQAKKPGGKVEKPS).

Belongs to the geminiviridae capsid protein family. As to quaternary structure, homomultimer. Interacts with the movement protein. Binds to single-stranded and double-stranded viral DNA.

It localises to the virion. The protein localises to the host nucleus. Its function is as follows. Encapsidates the viral genome into characteristic twinned ('geminate') particles. Binds the genomic viral ssDNA and shuttles it into and out of the cell nucleus. Plays a role in protection of the genome from degradation, virus acquisition and transmission by insect vectors, infectivity, and systemic movement. The CP of monopartite geminiviruses is absolutely essential for virus movement. This Avena sativa (Oat) protein is Capsid protein.